The primary structure comprises 66 residues: Sodium/potassium-transporting ATPase subunit gamma (66 aa).

A helical membrane pass occupies residues 29-46; that stretch reads GGLIFAGLAFVVGLLILL.

It belongs to the FXYD family. As to quaternary structure, regulatory subunit of the sodium/potassium-transporting ATPase which is composed of a catalytic alpha subunit, an auxiliary non-catalytic beta subunit and an additional regulatory subunit. In terms of tissue distribution, highest levels expressed in the kidney and spleen. Restricted to the basolateral membrane in renal epithelial cells and varies in its level of expression along the nephron.

The protein resides in the membrane. Its function is as follows. May be involved in forming the receptor site for cardiac glycoside binding or may modulate the transport function of the sodium ATPase. The protein is Sodium/potassium-transporting ATPase subunit gamma (Fxyd2) of Rattus norvegicus (Rat).